The following is a 348-amino-acid chain: Dihydroorotase (348 aa).

The Zn(2+) site is built by histidine 17 and histidine 19. Substrate-binding positions include 19-21 and asparagine 45; that span reads HLR. Zn(2+) is bound by residues lysine 103, histidine 140, and histidine 178. Lysine 103 is subject to N6-carboxylysine. Position 140 (histidine 140) interacts with substrate. Leucine 223 is a binding site for substrate. Residue aspartate 251 participates in Zn(2+) binding. Residue aspartate 251 is part of the active site. Residues histidine 255 and alanine 267 each coordinate substrate.

It belongs to the metallo-dependent hydrolases superfamily. DHOase family. Class II DHOase subfamily. As to quaternary structure, homodimer. Zn(2+) is required as a cofactor.

The catalysed reaction is (S)-dihydroorotate + H2O = N-carbamoyl-L-aspartate + H(+). It participates in pyrimidine metabolism; UMP biosynthesis via de novo pathway; (S)-dihydroorotate from bicarbonate: step 3/3. Its function is as follows. Catalyzes the reversible cyclization of carbamoyl aspartate to dihydroorotate. This Shigella boydii serotype 4 (strain Sb227) protein is Dihydroorotase.